The chain runs to 105 residues: Thioredoxin (105 aa).

The 105-residue stretch at 1–105 (MVNNVTDISF…SLLDWINKSI (105 aa)) folds into the Thioredoxin domain. C30 and C33 are disulfide-bonded.

Belongs to the thioredoxin family.

Its function is as follows. Component of the thioredoxin-thioredoxin reductase system. Participates in various redox reactions through the reversible oxidation of its active center dithiol to a disulfide and catalyzes dithiol-disulfide exchange reactions. The chain is Thioredoxin (trxA) from Rickettsia typhi (strain ATCC VR-144 / Wilmington).